The following is a 336-amino-acid chain: Glutamyl endopeptidase (336 aa).

Residues 1–29 (MKGKFLKVSSLFVATLTTATLVSSPAANA) form the signal peptide. A propeptide spanning residues 30–68 (LSSKAMDNHPQQTQSSKQQTPKIQKGGNLKPLEQREHAN) is cleaved from the precursor. The tract at residues 34-61 (AMDNHPQQTQSSKQQTPKIQKGGNLKPL) is disordered. The segment covering 39 to 51 (PQQTQSSKQQTPK) has biased composition (low complexity). Residues histidine 119, aspartate 161, and serine 237 each act as charge relay system in the active site. The disordered stretch occupies residues 283-336 (FANDDQPNNPDNPDNPNNPDNPNNPDEPNNPDNPNNPDNPDNGDNNNSDNPDAA). Positions 286-336 (DDQPNNPDNPDNPNNPDNPNNPDEPNNPDNPNNPDNPDNGDNNNSDNPDAA) are enriched in low complexity. Repeat copies occupy residues 289 to 291 (PNN), 292 to 294 (PDN), 295 to 297 (PDN), 298 to 300 (PNN), 301 to 303 (PDN), 304 to 306 (PNN), 310 to 312 (PNN), 313 to 315 (PDN), 316 to 318 (PNN), 319 to 321 (PDN), and 322 to 324 (PDN). Residues 289–324 (PNNPDNPDNPNNPDNPNNPDEPNNPDNPNNPDNPDN) form an 11 X 3 AA repeats of P-[DN]-N region.

This sequence belongs to the peptidase S1B family. In terms of processing, proteolytically cleaved by aureolysin (aur). This cleavage leads to the activation of SspA.

Its subcellular location is the secreted. It carries out the reaction Preferential cleavage: Glu-|-Xaa, Asp-|-Xaa.. Functionally, preferentially cleaves peptide bonds on the carboxyl-terminal side of aspartate and glutamate. Along with other extracellular proteases it is involved in colonization and infection of human tissues. Required for proteolytic maturation of thiol protease SspB and inactivation of SspC, an inhibitor of SspB. It is the most important protease for degradation of fibronectin-binding protein (FnBP) and surface protein A, which are involved in adherence to host cells. May also protect bacteria against host defense mechanism by cleaving the immunoglobulin classes IgG, IgA and IgM. May be involved in the stability of secreted lipases. The chain is Glutamyl endopeptidase (sspA) from Staphylococcus aureus (strain NCTC 8325 / PS 47).